Reading from the N-terminus, the 452-residue chain is Protein henna (452 aa).

The ACT domain maps to 36 to 107 (FSPKDSSLSS…EQCSYFNIIS (72 aa)). Position 272 is a phosphoserine; by CaMK2 (serine 272). Positions 284, 289, and 329 each coordinate Fe cation.

It belongs to the biopterin-dependent aromatic amino acid hydroxylase family. It depends on Fe(2+) as a cofactor. As to expression, phenylalanine hydrolase activity is found in yolk granules of embryos, and female abdomen and fat body tissues. Tryptophan hydroxylase is expressed in serotonergic neurons. Both enzymes are present in cuticular tissues.

It carries out the reaction (6R)-L-erythro-5,6,7,8-tetrahydrobiopterin + L-phenylalanine + O2 = (4aS,6R)-4a-hydroxy-L-erythro-5,6,7,8-tetrahydrobiopterin + L-tyrosine. The enzyme catalyses (6R)-L-erythro-5,6,7,8-tetrahydrobiopterin + L-tryptophan + O2 = 5-hydroxy-L-tryptophan + (4aS,6R)-4a-hydroxy-L-erythro-5,6,7,8-tetrahydrobiopterin. The protein operates within amino-acid degradation; L-phenylalanine degradation; acetoacetate and fumarate from L-phenylalanine: step 1/6. N-terminal region of PAH is thought to contain allosteric binding sites for phenylalanine and to constitute an 'inhibitory' domain that regulates the activity of a catalytic domain in the C-terminal portion of the molecule. This chain is Protein henna (Hn), found in Drosophila melanogaster (Fruit fly).